The following is a 527-amino-acid chain: Endogenous retrovirus group FC1 member 1 Env polyprotein (527 aa).

The tract at residues 1-411 is surface protein; the sequence is MNSPCDRLQQ…EPRPQNKSKW (411 aa). Residues 280-283 carry the CXXC motif; that stretch reads CFLC. A fusion peptide region spans residues 412-432; that stretch reads AIFLPLVLGISLASSLVASGL. A transmembrane protein region spans residues 412 to 527; sequence AIFLPLVLGI…LKKKKSSKRS (116 aa). A CKS-17 motif is present at residues 477–493; the sequence is AQNRQALDLLMAEKGRT. Cys-494 and Cys-501 are oxidised to a cystine. The short motif at 494 to 502 is the CX6CC element; the sequence is CLFLQEECC.

This sequence belongs to the gamma type-C retroviral envelope protein family. HERV class-I F(c)2 env subfamily. Post-translationally, the CXXC motif is highly conserved across a broad range of retroviral envelope proteins. It is thought to participate in the formation of a labile disulfide bond possibly with the CX6CC motif present in the transmembrane domain. As to expression, low expression in skin and testis.

Its subcellular location is the virion. In terms of biological role, retroviral envelope proteins mediate receptor recognition and membrane fusion during early infection. Endogenous envelope proteins may have kept, lost or modified their original function during evolution. This endogenous envelope protein has lost its original fusogenic properties. The protein is Endogenous retrovirus group FC1 member 1 Env polyprotein (ERVFC1-1) of Homo sapiens (Human).